Consider the following 220-residue polypeptide: Chaperone protein TorD (220 aa).

This sequence belongs to the TorD/DmsD family. TorD subfamily.

It is found in the cytoplasm. Involved in the biogenesis of TorA. Acts on TorA before the insertion of the molybdenum cofactor and, as a result, probably favors a conformation of the apoenzyme that is competent for acquiring the cofactor. The sequence is that of Chaperone protein TorD from Vibrio cholerae serotype O1 (strain M66-2).